The primary structure comprises 226 residues: MTSGGGYGDPSQKIDYVFKVVLIGDSAVGKSQILARYARDEFSLDSKATIGVEFQTRTLVIDHKSVKAQIWDTAGQERYRAVTSAYYRGAVGAMLVYDITRRQTFDHIPRWLEELRAHADKNIVIILIGNKSDLVDQRAIPTEDAKEFAEKEGLFFLETSAFNATNVESAFSTVLTEIFNIVNKKSLAASEDQENGNPGSLAGKKIDIVPGPGQVIPNKSNMCCNS.

The residue at position 2 (Thr2) is an N-acetylthreonine. Residue 24–31 (GDSAVGKS) coordinates GTP. The Effector region signature appears at 46-54 (SKATIGVEF). GTP-binding positions include 72-76 (DTAGQ), 130-133 (NKSD), and 160-161 (SA). Residues 189–226 (ASEDQENGNPGSLAGKKIDIVPGPGQVIPNKSNMCCNS) form a disordered region. Residues 217-226 (PNKSNMCCNS) show a composition bias toward polar residues. S-geranylgeranyl cysteine attachment occurs at residues Cys223 and Cys224.

It belongs to the small GTPase superfamily. Rab family. As to quaternary structure, interacts with TCTP1.

The protein resides in the cell membrane. Its function is as follows. Intracellular vesicle trafficking and protein transport. This chain is Ras-related protein RABA4a, found in Arabidopsis thaliana (Mouse-ear cress).